The primary structure comprises 514 residues: uncharacterized protein (514 aa).

The segment covering 1–15 has biased composition (low complexity); it reads MSSPRGASSMSSRSP. The disordered stretch occupies residues 1 to 22; it reads MSSPRGASSMSSRSPVNLEPES.

This is an uncharacterized protein from Ictaluridae (bullhead catfishes).